The following is a 442-amino-acid chain: Septin-8 (442 aa).

Ala2 is modified (N-acetylalanine). Residue Ser10 is modified to Phosphoserine. In terms of domain architecture, Septin-type G spans Gln41–Glu307. Residues Gly51–Ser58 are G1 motif. Residues Gly51–Ser58, Gly106, Lys187–Glu195, Gly241, and Arg256 each bind GTP. Positions Asp103–Gly106 are G3 motif. Residues Ala186–Asp189 form a G4 motif region. The stretch at Leu322–Ser410 forms a coiled coil. Basic and acidic residues predominate over residues His377–Leu391. Residues His377–Pro442 form a disordered region. Polar residues-rich tracts occupy residues Leu408–Pro420 and Gly432–Pro442.

This sequence belongs to the TRAFAC class TrmE-Era-EngA-EngB-Septin-like GTPase superfamily. Septin GTPase family. In terms of assembly, septins polymerize into heterooligomeric protein complexes that form filaments, and can associate with cellular membranes, actin filaments and microtubules. GTPase activity is required for filament formation. Interacts with CDK14, SEPTIN4, SEPTIN5 and SEPTIN7. Interacts with VAMP2; the interaction inhibits interaction of VAMP2 with SYP. Interacts with STX1A.

The protein resides in the cytoplasm. The protein localises to the cytoskeleton. Its subcellular location is the synapse. It localises to the cell projection. It is found in the axon. The protein resides in the cytoplasmic vesicle. The protein localises to the secretory vesicle. Its subcellular location is the synaptic vesicle membrane. It localises to the presynapse. In terms of biological role, filament-forming cytoskeletal GTPase. May play a role in platelet secretion. Seems to participate in the process of SNARE complex formation in synaptic vesicles. This chain is Septin-8, found in Callithrix jacchus (White-tufted-ear marmoset).